The following is a 449-amino-acid chain: Glucose-6-phosphate isomerase (449 aa).

The active-site Proton donor is E291. Catalysis depends on residues H312 and K426.

This sequence belongs to the GPI family.

It localises to the cytoplasm. It catalyses the reaction alpha-D-glucose 6-phosphate = beta-D-fructose 6-phosphate. It participates in carbohydrate biosynthesis; gluconeogenesis. It functions in the pathway carbohydrate degradation; glycolysis; D-glyceraldehyde 3-phosphate and glycerone phosphate from D-glucose: step 2/4. Its function is as follows. Catalyzes the reversible isomerization of glucose-6-phosphate to fructose-6-phosphate. This chain is Glucose-6-phosphate isomerase, found in Streptococcus pneumoniae (strain ATCC BAA-255 / R6).